Consider the following 298-residue polypeptide: Ribosomal protein L11 methyltransferase (298 aa).

S-adenosyl-L-methionine-binding residues include Thr139, Gly163, Asp185, and Asn232.

This sequence belongs to the methyltransferase superfamily. PrmA family.

It is found in the cytoplasm. The enzyme catalyses L-lysyl-[protein] + 3 S-adenosyl-L-methionine = N(6),N(6),N(6)-trimethyl-L-lysyl-[protein] + 3 S-adenosyl-L-homocysteine + 3 H(+). Its function is as follows. Methylates ribosomal protein L11. The chain is Ribosomal protein L11 methyltransferase from Microcystis aeruginosa (strain NIES-843 / IAM M-2473).